Consider the following 354-residue polypeptide: Protein-glutamate methylesterase/protein-glutamine glutaminase 2 (354 aa).

The Response regulatory domain occupies 5–122 (RVLIVDDSAL…SLKIKEVAEE (118 aa)). The residue at position 56 (Asp56) is a 4-aspartylphosphate. One can recognise a CheB-type methylesterase domain in the interval 159-354 (PDTSFKKLIL…IADRIVELVR (196 aa)). Catalysis depends on residues Ser172, His199, and Asp298.

This sequence belongs to the CheB family. Phosphorylated by CheA. Phosphorylation of the N-terminal regulatory domain activates the methylesterase activity.

The protein resides in the cytoplasm. It carries out the reaction [protein]-L-glutamate 5-O-methyl ester + H2O = L-glutamyl-[protein] + methanol + H(+). The catalysed reaction is L-glutaminyl-[protein] + H2O = L-glutamyl-[protein] + NH4(+). Its function is as follows. Involved in chemotaxis. Part of a chemotaxis signal transduction system that modulates chemotaxis in response to various stimuli. Catalyzes the demethylation of specific methylglutamate residues introduced into the chemoreceptors (methyl-accepting chemotaxis proteins or MCP) by CheR. Also mediates the irreversible deamidation of specific glutamine residues to glutamic acid. This is Protein-glutamate methylesterase/protein-glutamine glutaminase 2 from Carboxydothermus hydrogenoformans (strain ATCC BAA-161 / DSM 6008 / Z-2901).